The sequence spans 449 residues: Asparagine--tRNA ligase (449 aa).

It belongs to the class-II aminoacyl-tRNA synthetase family. As to quaternary structure, homodimer.

It is found in the cytoplasm. The catalysed reaction is tRNA(Asn) + L-asparagine + ATP = L-asparaginyl-tRNA(Asn) + AMP + diphosphate + H(+). In Mesomycoplasma hyopneumoniae (strain 7448) (Mycoplasma hyopneumoniae), this protein is Asparagine--tRNA ligase.